The following is a 303-amino-acid chain: ATP synthase gamma chain (303 aa).

Belongs to the ATPase gamma chain family. F-type ATPases have 2 components, CF(1) - the catalytic core - and CF(0) - the membrane proton channel. CF(1) has five subunits: alpha(3), beta(3), gamma(1), delta(1), epsilon(1). CF(0) has three main subunits: a, b and c.

The protein resides in the cell membrane. Functionally, produces ATP from ADP in the presence of a proton gradient across the membrane. The gamma chain is believed to be important in regulating ATPase activity and the flow of protons through the CF(0) complex. The polypeptide is ATP synthase gamma chain (Oenococcus oeni (strain ATCC BAA-331 / PSU-1)).